Consider the following 466-residue polypeptide: Ribulose bisphosphate carboxylase large chain (466 aa).

At Lys-5 the chain carries N6,N6,N6-trimethyllysine. Substrate-binding residues include Asn-114 and Thr-164. Lys-166 functions as the Proton acceptor in the catalytic mechanism. Lys-168 is a binding site for substrate. The Mg(2+) site is built by Lys-192, Asp-194, and Glu-195. Lys-192 carries the N6-carboxylysine modification. The Proton acceptor role is filled by His-285. Positions 286, 318, and 370 each coordinate substrate.

It belongs to the RuBisCO large chain family. Type I subfamily. Heterohexadecamer of 8 large chains and 8 small chains; disulfide-linked. The disulfide link is formed within the large subunit homodimers. It depends on Mg(2+) as a cofactor. Post-translationally, the disulfide bond which can form in the large chain dimeric partners within the hexadecamer appears to be associated with oxidative stress and protein turnover.

Its subcellular location is the plastid. The protein localises to the chloroplast. The catalysed reaction is 2 (2R)-3-phosphoglycerate + 2 H(+) = D-ribulose 1,5-bisphosphate + CO2 + H2O. The enzyme catalyses D-ribulose 1,5-bisphosphate + O2 = 2-phosphoglycolate + (2R)-3-phosphoglycerate + 2 H(+). Functionally, ruBisCO catalyzes two reactions: the carboxylation of D-ribulose 1,5-bisphosphate, the primary event in carbon dioxide fixation, as well as the oxidative fragmentation of the pentose substrate in the photorespiration process. Both reactions occur simultaneously and in competition at the same active site. In Moringa oleifera (Horseradish tree), this protein is Ribulose bisphosphate carboxylase large chain.